Consider the following 216-residue polypeptide: DNA repair and recombination protein RadB (216 aa).

Belongs to the eukaryotic RecA-like protein family. RadB subfamily.

Its function is as follows. Involved in DNA repair and in homologous recombination. May regulate the cleavage reactions of the branch-structured DNA. Has a very weak ATPase activity that is not stimulated by DNA. Binds DNA but does not promote DNA strands exchange. In Methanococcus maripaludis (strain C5 / ATCC BAA-1333), this protein is DNA repair and recombination protein RadB.